The following is a 263-amino-acid chain: Kallikrein 1-related peptidase b24 (263 aa).

The signal sequence occupies residues 1–17 (MWFLILFLALSLGGIDA). Residues 18–24 (APPVQSR) constitute a propeptide, activation peptide. Residues 25 to 260 (VVGGFKCEKN…FASWIKDTMA (236 aa)) form the Peptidase S1 domain. Disulfide bonds link C31–C175, C50–C66, C154–C221, C186–C200, and C211–C236. The active-site Charge relay system is H65. Residues N69 and N105 are each glycosylated (N-linked (GlcNAc...) asparagine). D122 acts as the Charge relay system in catalysis. An N-linked (GlcNAc...) asparagine glycan is attached at N185. S215 functions as the Charge relay system in the catalytic mechanism.

It belongs to the peptidase S1 family. Kallikrein subfamily.

The catalysed reaction is Preferential cleavage of Arg-|-Xaa bonds in small molecule substrates. Highly selective action to release kallidin (lysyl-bradykinin) from kininogen involves hydrolysis of Met-|-Xaa or Leu-|-Xaa.. Its function is as follows. Glandular kallikreins cleave Met-Lys and Arg-Ser bonds in kininogen to release Lys-bradykinin. The polypeptide is Kallikrein 1-related peptidase b24 (Klk1b24) (Mus musculus (Mouse)).